Consider the following 267-residue polypeptide: Putative ankyrin repeat protein RF_1099 (267 aa).

ANK repeat units follow at residues 46–75 (DPIT…GVNQ), 78–107 (LGWV…SMSL), 136–165 (DGIT…NPNV), and 170–199 (TGMT…DPNI). The stretch at 238–265 (KQKIIKERNSIKTRNKEKEKEIKKLFNS) forms a coiled coil.

This chain is Putative ankyrin repeat protein RF_1099, found in Rickettsia felis (strain ATCC VR-1525 / URRWXCal2) (Rickettsia azadi).